Consider the following 199-residue polypeptide: Recombination protein RecR (199 aa).

The C4-type zinc-finger motif lies at 58–73 (CQTCHHLSAEPTCEIC). The Toprim domain maps to 81–175 (GQICVVADSR…RVSRIAYGLP (95 aa)).

Belongs to the RecR family.

In terms of biological role, may play a role in DNA repair. It seems to be involved in an RecBC-independent recombinational process of DNA repair. It may act with RecF and RecO. This chain is Recombination protein RecR, found in Synechococcus sp. (strain WH7803).